The chain runs to 30 residues: Beta-endorphin-2 (30 aa).

Tyr1 bears the N-acetyltyrosine mark.

The protein belongs to the POMC family.

It is found in the secreted. In Oncorhynchus keta (Chum salmon), this protein is Beta-endorphin-2.